The following is a 176-amino-acid chain: Cell division control protein 31 (176 aa).

The span at M1–R12 shows a compositional bias: basic residues. Residues M1–L21 form a disordered region. EF-hand domains lie at E34–N69, A70–E105, D107–N142, and I143–A176. Ca(2+)-binding residues include D47, D49, D51, and E58. 5 residues coordinate Ca(2+): D156, D158, D160, E162, and E167.

It belongs to the centrin family. As to quaternary structure, component of the spindle pole body (SPB), acting as the connector of microtubule arrays in the cytoplasm and the nucleoplasm, is involved in nuclear positioning before chromosome segregation, SPB separation, spindle formation, chromosome segregation, nuclear migration into the bud, nuclear reorientation after cytokinesis and nuclear fusion during conjugation. The SPB half-bridge, which is tightly associated with the cytoplasmic side of the nuclear envelope and the SPB, is playing a key role as the starting structure for and in the initiation of SPB duplication in G1. Within the complex, interacts with sad1.

The protein resides in the nucleus. In terms of biological role, required for the proper coordination between exit from mitosis and the initiation of septation. Has a role in bipolar spindle formation during spindle pole body (SPB) duplication. Required for the localization of sad1 to the SPB. The chain is Cell division control protein 31 (cdc31) from Schizosaccharomyces pombe (strain 972 / ATCC 24843) (Fission yeast).